A 76-amino-acid polypeptide reads, in one-letter code: Large ribosomal subunit protein uL24 (76 aa).

Belongs to the universal ribosomal protein uL24 family. In terms of assembly, part of the 50S ribosomal subunit.

In terms of biological role, one of two assembly initiator proteins, it binds directly to the 5'-end of the 23S rRNA, where it nucleates assembly of the 50S subunit. One of the proteins that surrounds the polypeptide exit tunnel on the outside of the subunit. This chain is Large ribosomal subunit protein uL24, found in Wolinella succinogenes (strain ATCC 29543 / DSM 1740 / CCUG 13145 / JCM 31913 / LMG 7466 / NCTC 11488 / FDC 602W) (Vibrio succinogenes).